Reading from the N-terminus, the 647-residue chain is Probable cobalt/nickel-exporting P-type ATPase (647 aa).

Transmembrane regions (helical) follow at residues 33-53 (WAAA…LGAP), 55-75 (AVVW…PAWV), 94-114 (AAIG…IVIF), 260-280 (AGVV…GADL), and 291-311 (MIVA…LSAI). Catalysis depends on Asp339, which acts as the 4-aspartylphosphate intermediate. Positions 532 and 536 each coordinate Mg(2+). The helical transmembrane segment at 587–607 (VIANLVMAGAAITTLVLWDLF) threads the bilayer.

The protein belongs to the cation transport ATPase (P-type) (TC 3.A.3) family. Type IB subfamily.

The protein localises to the cell membrane. It carries out the reaction Ni(2+)(out) + ATP + H2O = Ni(2+)(in) + ADP + phosphate + H(+). It catalyses the reaction Co(2+)(out) + ATP + H2O = Co(2+)(in) + ADP + phosphate + H(+). In terms of biological role, involved in heavy metal homeostasis. Probably exports nickel and cobalt ions out of the cell. The sequence is that of Probable cobalt/nickel-exporting P-type ATPase (ctpD) from Mycolicibacterium smegmatis (strain ATCC 700084 / mc(2)155) (Mycobacterium smegmatis).